The sequence spans 403 residues: Phosphopentomutase (403 aa).

Mn(2+)-binding residues include Asp13, Asp298, His303, Asp339, His340, and His351.

Belongs to the phosphopentomutase family. The cofactor is Mn(2+).

It is found in the cytoplasm. The catalysed reaction is 2-deoxy-alpha-D-ribose 1-phosphate = 2-deoxy-D-ribose 5-phosphate. It catalyses the reaction alpha-D-ribose 1-phosphate = D-ribose 5-phosphate. It functions in the pathway carbohydrate degradation; 2-deoxy-D-ribose 1-phosphate degradation; D-glyceraldehyde 3-phosphate and acetaldehyde from 2-deoxy-alpha-D-ribose 1-phosphate: step 1/2. Its function is as follows. Isomerase that catalyzes the conversion of deoxy-ribose 1-phosphate (dRib-1-P) and ribose 1-phosphate (Rib-1-P) to deoxy-ribose 5-phosphate (dRib-5-P) and ribose 5-phosphate (Rib-5-P), respectively. This Streptococcus equi subsp. zooepidemicus (strain H70) protein is Phosphopentomutase.